The following is a 336-amino-acid chain: MDIIIVGFGAIGKGIAKVLYDKKDYLKKNYEEFKVVAITDSSGAAIDEDGLDLLKAIEVKEKTGKIKNYPEKGREMSSIDVIKEVDADVVVEVTPSNLETGDPAKTHILESFKNKKHVVTANKGPLALCYKELIEEAKKHGVIFRHEASVGGAMPIINLAKETLAGNEILSIRGILNGTTNYILTKMEKEGLDFETALKEAKELGIAETDPTQDIEGLDTAAKIVILANSIMGMNKTIKDVKVKGISRITPEALFLANKRGYTIKLIGQIKDGYLIVEPMLVPIDSPLNVKGTLNVAMFETDLAKEVVVVGRGAGPIETASAILSDLIHIYNSTKK.

An NADPH-binding site is contributed by Phe8. Residues Ala10, Ile11, and Thr94 each coordinate NAD(+). The NADPH site is built by Ile11, Thr94, and Lys123. Residues Ile11, Thr94, and Lys123 each coordinate NADP(+). Na(+) is bound by residues Glu147, Val150, and Gly152. Gly205 and Glu208 together coordinate NADP(+). Residues Glu208 and Asp219 each coordinate L-homoserine. The active-site Proton donor is the Lys223. An NADPH-binding site is contributed by Gly315. Gly315 contacts NAD(+). NADP(+) is bound at residue Gly315.

This sequence belongs to the homoserine dehydrogenase family. A metal cation serves as cofactor.

It carries out the reaction L-homoserine + NADP(+) = L-aspartate 4-semialdehyde + NADPH + H(+). It catalyses the reaction L-homoserine + NAD(+) = L-aspartate 4-semialdehyde + NADH + H(+). It functions in the pathway amino-acid biosynthesis; L-methionine biosynthesis via de novo pathway; L-homoserine from L-aspartate: step 3/3. Its pathway is amino-acid biosynthesis; L-threonine biosynthesis; L-threonine from L-aspartate: step 3/5. Functionally, catalyzes the conversion of L-aspartate-beta-semialdehyde (L-Asa) to L-homoserine (L-Hse), the third step in the biosynthesis of threonine and methionine from aspartate. This is Homoserine dehydrogenase (hom) from Methanocaldococcus jannaschii (strain ATCC 43067 / DSM 2661 / JAL-1 / JCM 10045 / NBRC 100440) (Methanococcus jannaschii).